The following is a 439-amino-acid chain: L-cysteine:1D-myo-inositol 2-amino-2-deoxy-alpha-D-glucopyranoside ligase 2 (439 aa).

Cys60 provides a ligand contact to Zn(2+). L-cysteinyl-5'-AMP contacts are provided by residues 60 to 63 (CGIT), Thr75, and 98 to 100 (NVT). The 'HIGH' region signature appears at 62–72 (ITPYDSTHLGH). A 'ERGGDP' region motif is present at residues 203-208 (ERGGDP). Residue Trp243 coordinates L-cysteinyl-5'-AMP. Cys247 provides a ligand contact to Zn(2+). 265–267 (GVD) provides a ligand contact to L-cysteinyl-5'-AMP. His272 contributes to the Zn(2+) binding site. Residue Ile299 coordinates L-cysteinyl-5'-AMP. A 'KMSKS' region motif is present at residues 305-309 (KMSKS).

This sequence belongs to the class-I aminoacyl-tRNA synthetase family. MshC subfamily. As to quaternary structure, monomer. The cofactor is Zn(2+).

The enzyme catalyses 1D-myo-inositol 2-amino-2-deoxy-alpha-D-glucopyranoside + L-cysteine + ATP = 1D-myo-inositol 2-(L-cysteinylamino)-2-deoxy-alpha-D-glucopyranoside + AMP + diphosphate + H(+). In terms of biological role, catalyzes the ATP-dependent condensation of GlcN-Ins and L-cysteine to form L-Cys-GlcN-Ins. The sequence is that of L-cysteine:1D-myo-inositol 2-amino-2-deoxy-alpha-D-glucopyranoside ligase 2 from Corynebacterium urealyticum (strain ATCC 43042 / DSM 7109).